We begin with the raw amino-acid sequence, 1097 residues long: Mitochondrial distribution and morphology protein 34 (1097 aa).

The SMP-LTD domain occupies M1–Q198. Disordered regions lie at residues E204–S305, A317–S343, Q390–V427, D480–L520, P556–T600, L645–S675, G716–V817, and G923–E1097. Residues A205 to T229 show a composition bias toward basic and acidic residues. Basic residues predominate over residues R252 to R263. Residues S274 to R283 show a composition bias toward low complexity. Residues Q284–A293 show a composition bias toward basic residues. Over residues S406 to G416 the composition is skewed to basic and acidic residues. Low complexity-rich tracts occupy residues S508–S519 and G572–S586. Positions T662 to S675 are enriched in polar residues. A compositionally biased stretch (low complexity) spans G759 to P779. A compositionally biased stretch (polar residues) spans Y784–Q796. The segment covering G923 to A943 has biased composition (low complexity). The span at S1004 to A1024 shows a compositional bias: polar residues. Positions A1045–S1059 are enriched in low complexity.

Belongs to the MDM34 family. Component of the ER-mitochondria encounter structure (ERMES) or MDM complex, composed of MMM1, MDM10, MDM12 and MDM34.

It is found in the mitochondrion outer membrane. Its function is as follows. Component of the ERMES/MDM complex, which serves as a molecular tether to connect the endoplasmic reticulum (ER) and mitochondria. Components of this complex are involved in the control of mitochondrial shape and protein biogenesis, and function in nonvesicular lipid trafficking between the ER and mitochondria. MDM34 is required for the interaction of the ER-resident membrane protein MMM1 and the outer mitochondrial membrane-resident beta-barrel protein MDM10. The chain is Mitochondrial distribution and morphology protein 34 from Mycosarcoma maydis (Corn smut fungus).